The primary structure comprises 89 residues: Small ribosomal subunit protein uS17 (89 aa).

Belongs to the universal ribosomal protein uS17 family. Part of the 30S ribosomal subunit.

In terms of biological role, one of the primary rRNA binding proteins, it binds specifically to the 5'-end of 16S ribosomal RNA. The sequence is that of Small ribosomal subunit protein uS17 from Xylella fastidiosa (strain M12).